The sequence spans 309 residues: Olfactory receptor 6C4 (309 aa).

The Extracellular portion of the chain corresponds to 1 to 23; that stretch reads MKNRTMFGEFILLGLTNQPELQV. A glycan (N-linked (GlcNAc...) asparagine) is linked at Asn-3. Residues 24–44 form a helical membrane-spanning segment; that stretch reads MIFIFLFLTYMLSILGNLTII. Topologically, residues 45–52 are cytoplasmic; it reads TLTLLDPH. A helical transmembrane segment spans residues 53–73; it reads LQTPMYFFLRNFSFLEISFTS. At 74–97 the chain is on the extracellular side; that stretch reads IFIPRFLTSMTTGNKVISFAGCLT. A disulfide bridge links Cys-95 with Cys-187. A helical transmembrane segment spans residues 98-118; it reads QYFFAIFLGATEFYLLASMSY. At 119–137 the chain is on the cytoplasmic side; it reads DRYVAICKPLHYLTIMSSR. The helical transmembrane segment at 138–158 threads the bilayer; that stretch reads VCIQLVFCSWLGGFLAILPPI. At 159 to 195 the chain is on the extracellular side; that stretch reads ILMTQVDFCVSNILNHYYCDYGPLVELACSDTSLLEL. Residues 196 to 215 traverse the membrane as a helical segment; it reads MVILLAVVTLMVTLVLVTLS. Residues 216–235 lie on the Cytoplasmic side of the membrane; sequence YTYIIRTILRIPSAQQRTKA. The chain crosses the membrane as a helical span at residues 236–256; it reads FSTCSSHMIVISLSYGSCMFM. At 257-269 the chain is on the extracellular side; that stretch reads YINPSAKEGGAFN. The helical transmembrane segment at 270–290 threads the bilayer; sequence KGIAVLITSVTPLLNPFIYTL. Residues 291–309 lie on the Cytoplasmic side of the membrane; sequence RNQQVKQAFKDSVKKIVKL.

The protein belongs to the G-protein coupled receptor 1 family.

Its subcellular location is the cell membrane. Functionally, odorant receptor. This is Olfactory receptor 6C4 (OR6C4) from Homo sapiens (Human).